The sequence spans 453 residues: tRNA modification GTPase MnmE (453 aa).

3 residues coordinate (6S)-5-formyl-5,6,7,8-tetrahydrofolate: R22, E79, and K119. A TrmE-type G domain is found at 215 to 376; the sequence is GMKVVIAGRP…LQQHLKSLMG (162 aa). N225 serves as a coordination point for K(+). Residues 225–230, 244–250, 269–272, and 334–337 contribute to the GTP site; these read NAGKSS, TEIAGTT, DTAG, and NKAD. S229 is a binding site for Mg(2+). Residues T244, I246, and T249 each coordinate K(+). T250 lines the Mg(2+) pocket. K453 serves as a coordination point for (6S)-5-formyl-5,6,7,8-tetrahydrofolate.

The protein belongs to the TRAFAC class TrmE-Era-EngA-EngB-Septin-like GTPase superfamily. TrmE GTPase family. As to quaternary structure, homodimer. Heterotetramer of two MnmE and two MnmG subunits. K(+) serves as cofactor.

Its subcellular location is the cytoplasm. Functionally, exhibits a very high intrinsic GTPase hydrolysis rate. Involved in the addition of a carboxymethylaminomethyl (cmnm) group at the wobble position (U34) of certain tRNAs, forming tRNA-cmnm(5)s(2)U34. The protein is tRNA modification GTPase MnmE of Shewanella sediminis (strain HAW-EB3).